The primary structure comprises 101 residues: Protein E7 (101 aa).

An E7 terminal domain region spans residues 1-40; the sequence is MHGKYPTLKDIVLELTPDPVGLHCNEQLDSSEDEVDEQAT. The LXCXE motif; interaction with host RB1 and TMEM173/STING signature appears at 22-26; the sequence is LHCNE. A zinc finger spans residues 61 to 97; sequence CSKCCSNVRLVVECTGPDIHDLHDLLLGTLNIVCPLC. The Nuclear export signal motif lies at 79 to 87; it reads IHDLHDLLL.

The protein belongs to the papillomaviridae E7 protein family. In terms of assembly, homodimer. Homooligomer. Interacts with host RB1; this interaction induces dissociation of RB1-E2F1 complex thereby disrupting RB1 activity. Interacts with host EP300; this interaction represses EP300 transcriptional activity. Interacts with protein E2; this interaction inhibits E7 oncogenic activity. Interacts with host TMEM173/STING; this interaction impairs the ability of TMEM173/STING to sense cytosolic DNA and promote the production of type I interferon (IFN-alpha and IFN-beta). In terms of processing, highly phosphorylated.

It localises to the host cytoplasm. It is found in the host nucleus. In terms of biological role, plays a role in viral genome replication by driving entry of quiescent cells into the cell cycle. Stimulation of progression from G1 to S phase allows the virus to efficiently use the cellular DNA replicating machinery to achieve viral genome replication. E7 protein has both transforming and trans-activating activities. Induces the disassembly of the E2F1 transcription factor from RB1, with subsequent transcriptional activation of E2F1-regulated S-phase genes. Interferes with host histone deacetylation mediated by HDAC1 and HDAC2, leading to transcription activation. Also plays a role in the inhibition of both antiviral and antiproliferative functions of host interferon alpha. Interaction with host TMEM173/STING impairs the ability of TMEM173/STING to sense cytosolic DNA and promote the production of type I interferon (IFN-alpha and IFN-beta). The chain is Protein E7 from Human papillomavirus 13.